We begin with the raw amino-acid sequence, 320 residues long: L-lactate dehydrogenase (320 aa).

Residues Val18, Asp39, Arg44, Tyr69, and 83-84 (GA) each bind NAD(+). Residues Gln86 and Arg92 each contribute to the substrate site. NAD(+)-binding positions include Thr105, 122-124 (AAN), and Ser147. Position 124–127 (124–127 (NPVD)) interacts with substrate. Position 152 to 155 (152 to 155 (DSAR)) interacts with substrate. Residue His179 is the Proton acceptor of the active site. At Tyr223 the chain carries Phosphotyrosine. Thr232 contacts substrate.

This sequence belongs to the LDH/MDH superfamily. LDH family. As to quaternary structure, homotetramer.

The protein resides in the cytoplasm. It carries out the reaction (S)-lactate + NAD(+) = pyruvate + NADH + H(+). It functions in the pathway fermentation; pyruvate fermentation to lactate; (S)-lactate from pyruvate: step 1/1. In terms of biological role, catalyzes the conversion of lactate to pyruvate. This chain is L-lactate dehydrogenase, found in Pediococcus pentosaceus (strain ATCC 25745 / CCUG 21536 / LMG 10740 / 183-1w).